Reading from the N-terminus, the 408-residue chain is MAPPLAPLPPRDPNGAGPEWREPGAVSFADVAVYFCREEWGCLRPAQRALYRDVMRETYGHLSALGIGGNKPALISWVEEEAELWGPAAQDPEVAKCQTQTDPADSRNKKKERQREGTGALEKPDPVAAGSPGLKSPQAPSAGPPYGWEQLSKAPHRGRPSLCAHPPVPRADQRHGCYVCGKSFAWRSTLVEHVYSHTGEKPFHCTDCGKGFGHASSLSKHRAIHRGERPHRCLECGRAFTQRSALTSHLRVHTGEKPYGCADCGRRFSQSSALYQHRRVHSGETPFPCPDCGRAFAYPSDLRRHVRTHTGEKPYPCPDCGRCFRQSSEMAAHRRTHSGEKPYPCPQCGRRFGQKSAVAKHQWVHRPGAGGHRGRVAGRLSVTLTPGHGDLDPPVGFQLYPEIFQECG.

A KRAB domain is found at 26 to 97 (VSFADVAVYF…AAQDPEVAKC (72 aa)). Residues 91–167 (DPEVAKCQTQ…GRPSLCAHPP (77 aa)) are disordered. C2H2-type zinc fingers lie at residues 175–197 (HGCY…VYSH), 203–225 (FHCT…RAIH), 231–253 (HRCL…LRVH), 259–281 (YGCA…RRVH), 287–309 (FPCP…VRTH), 315–337 (YPCP…RRTH), and 343–365 (YPCP…QWVH).

It belongs to the krueppel C2H2-type zinc-finger protein family. As to quaternary structure, interacts (via KRAB domain) with NR3C1/GR (via NR LBD domain); the interaction regulates transcription factor activity of NR3C1 by directing its actions toward certain biologic pathways.

Its subcellular location is the nucleus. Functionally, zinc finger protein that functions as a cofactor for steroid hormone receptors, such as NR3C1/GR. Directs NR3C1/GR transcriptional activity toward specific biologic pathways by changing NR3C1/GR binding and transcriptional activity on the glucocorticoid-responsive genes. This Homo sapiens (Human) protein is Zinc finger protein 764.